Here is a 205-residue protein sequence, read N- to C-terminus: uncharacterized protein (205 aa).

The region spanning 51–189 (ANVDAVAILA…KKGFAIDVRL (139 aa)) is the Nudix hydrolase domain. The Nudix box motif lies at 90 to 111 (GLVDSKESCEDAAIRELREETG).

It belongs to the Nudix hydrolase family.

Its subcellular location is the cytoplasm. It is found in the nucleus. This is an uncharacterized protein from Schizosaccharomyces pombe (strain 972 / ATCC 24843) (Fission yeast).